The following is a 399-amino-acid chain: E3 ubiquitin-protein ligase APD4 (399 aa).

2 helical membrane passes run 42 to 62 and 284 to 304; these read FGII…GVYG and LIAY…AIHF. The RING-type zinc finger occupies 348 to 387; the sequence is CAICFDAPRDCCFLPCGHCVSCYQCGTKIKRTKGRCPICR.

Expressed in the shoot apical meristems (SAM), root tips and inflorescences.

The protein resides in the endomembrane system. Its subcellular location is the vacuole membrane. It catalyses the reaction S-ubiquitinyl-[E2 ubiquitin-conjugating enzyme]-L-cysteine + [acceptor protein]-L-lysine = [E2 ubiquitin-conjugating enzyme]-L-cysteine + N(6)-ubiquitinyl-[acceptor protein]-L-lysine.. The protein operates within protein modification; protein ubiquitination. Involved in pollen mitosis II (PMII) regulation during male gametogenesis. In Arabidopsis thaliana (Mouse-ear cress), this protein is E3 ubiquitin-protein ligase APD4.